A 135-amino-acid polypeptide reads, in one-letter code: Galectin-1 (135 aa).

Residue Ala2 is modified to N-acetylalanine. A Galectin domain is found at 4 to 135 (GLVASNLNLK…DFKIKCVAFD (132 aa)). An N6-acetyllysine mark is found at Lys13 and Lys29. Ser30 carries the post-translational modification Phosphoserine; by FAM20C. A beta-D-galactoside contacts are provided by residues 45-49 (HFNPR), His53, Asn62, and 69-72 (WGTE). At Lys108 the chain carries N6-acetyllysine; alternate. At Lys108 the chain carries N6-succinyllysine; alternate. Lys128 is modified (N6-acetyllysine).

In terms of assembly, homodimer. Binds LGALS3BP. Interacts with CD2, CD3, CD4, CD6, CD7, CD43, ALCAM and CD45. Interacts with laminin (via poly-N-acetyllactosamine). Interacts with SUSD2. Interacts with cargo receptor TMED10; the interaction mediates the translocation from the cytoplasm into the ERGIC (endoplasmic reticulum-Golgi intermediate compartment) and thereby secretion. Interacts with CD69. In terms of tissue distribution, expressed in placenta, maternal decidua and fetal membranes. Within placenta, expressed in trophoblasts, stromal cells, villous endothelium, syncytiotrophoblast apical membrane and villous stroma. Within fetal membranes, expressed in amnion, chorioamniotic mesenchyma and chorion (at protein level). Expressed in cardiac, smooth, and skeletal muscle, neurons, thymus, kidney and hematopoietic cells.

Its subcellular location is the secreted. The protein localises to the extracellular space. The protein resides in the extracellular matrix. It localises to the cytoplasm. Its function is as follows. Lectin that binds beta-galactoside and a wide array of complex carbohydrates. Plays a role in regulating apoptosis, cell proliferation and cell differentiation. Inhibits CD45 protein phosphatase activity and therefore the dephosphorylation of Lyn kinase. Strong inducer of T-cell apoptosis. Plays a negative role in Th17 cell differentiation via activation of the receptor CD69. The chain is Galectin-1 from Homo sapiens (Human).